The chain runs to 247 residues: Carboxy-S-adenosyl-L-methionine synthase (247 aa).

S-adenosyl-L-methionine is bound by residues Tyr-40, 65 to 67 (GCS), 90 to 91 (DN), 122 to 123 (DI), Asn-137, and Arg-204.

Belongs to the class I-like SAM-binding methyltransferase superfamily. Cx-SAM synthase family. As to quaternary structure, homodimer.

The catalysed reaction is prephenate + S-adenosyl-L-methionine = carboxy-S-adenosyl-L-methionine + 3-phenylpyruvate + H2O. Catalyzes the conversion of S-adenosyl-L-methionine (SAM) to carboxy-S-adenosyl-L-methionine (Cx-SAM). This is Carboxy-S-adenosyl-L-methionine synthase from Pseudomonas syringae pv. tomato (strain ATCC BAA-871 / DC3000).